The following is a 929-amino-acid chain: Protein translocase subunit SecA (929 aa).

ATP is bound by residues glutamine 83, 101–105, and aspartate 491; that span reads GEGKT.

It belongs to the SecA family. In terms of assembly, monomer and homodimer. Part of the essential Sec protein translocation apparatus which comprises SecA, SecYEG and auxiliary proteins SecDF. Other proteins may also be involved.

It is found in the cell inner membrane. The protein resides in the cellular thylakoid membrane. It localises to the cytoplasm. It carries out the reaction ATP + H2O + cellular proteinSide 1 = ADP + phosphate + cellular proteinSide 2.. Functionally, part of the Sec protein translocase complex. Interacts with the SecYEG preprotein conducting channel. Has a central role in coupling the hydrolysis of ATP to the transfer of proteins into and across the cell membrane, serving as an ATP-driven molecular motor driving the stepwise translocation of polypeptide chains across the membrane. Its function is as follows. Probably participates in protein translocation into and across both the cytoplasmic and thylakoid membranes in cyanobacterial cells. The protein is Protein translocase subunit SecA of Thermosynechococcus vestitus (strain NIES-2133 / IAM M-273 / BP-1).